Reading from the N-terminus, the 724-residue chain is Probable metal-nicotianamine transporter YSL13 (724 aa).

Residues 1–54 (MATVPTPSEAHGGATPTAADVEMVEASELRRRGKPSGDRATGPSRDGAAAAAEE) are disordered. A run of 14 helical transmembrane segments spans residues 80 to 100 (AFVV…KLNL), 103 to 123 (GIIP…VRLW), 148 to 168 (CVVA…ILSM), 190 to 210 (LGWI…GLVP), 252 to 272 (LGIF…YTAT), 310 to 330 (IVNV…WPLI), 355 to 375 (VFIA…KMII), 423 to 443 (IPWY…IGTV), 455 to 475 (ILVA…GTGL), 487 to 507 (LAIF…LAGL), 541 to 561 (FVSQ…VFWL), 603 to 623 (LNLC…RDLV), 640 to 660 (FYIG…LFVW), and 675 to 695 (VASG…VLAL).

The protein belongs to the YSL (TC 2.A.67.2) family. Expressed in leaves and at low levels in root cortex.

The protein localises to the membrane. Its function is as follows. May be involved in the transport of nicotianamine-chelated metals. The polypeptide is Probable metal-nicotianamine transporter YSL13 (YSL13) (Oryza sativa subsp. japonica (Rice)).